A 473-amino-acid chain; its full sequence is H(+)/Cl(-) exchange transporter ClcA (473 aa).

Residues 1–32 are Cytoplasmic-facing; it reads MKTDTPSLETPQAARLRRRQLIRQLLERDKTP. Residues 33–69 form a helical membrane-spanning segment; the sequence is LAILFMAAVVGTLVGLAAVAFDKGVAWLQNQRMEALV. At 70 to 76 the chain is on the periplasmic side; it reads HTADNYP. A helical transmembrane segment spans residues 77–100; sequence LLLTVAFLCSAVLAMFGYFLVRKY. Positions 106–110 match the Selectivity filter part_1 motif; the sequence is GSGIP. A chloride-binding site is contributed by serine 107. An intramembrane region (helical) is located at residues 109 to 116; the sequence is IPEIEGAL. The Cytoplasmic segment spans residues 117-123; the sequence is EDQRPVR. Transmembrane regions (helical) follow at residues 124–141 and 148–166; these read WWRV…TLGG and EGPT…LDIF. Positions 146–150 match the Selectivity filter part_2 motif; sequence GREGP. Residues 167-176 are Cytoplasmic-facing; that stretch reads RLKGDEARHT. 2 intramembrane regions (helical) span residues 177–189 and 193–201; these read LLAT…LAAA and PLAGILFII. The Cytoplasmic segment spans residues 202–214; the sequence is EEMRPQFRYTLIS. A helical membrane pass occupies residues 215–232; it reads IKAVFIGVIMSTIMYRIF. Over 233-252 the chain is Periplasmic; sequence NHEVALIDVGKLSDAPLNTL. The chain crosses the membrane as a helical span at residues 253-281; it reads WLYLILGIIFGIFGPIFNKWVLGMQDLLH. Residues 282–287 are Cytoplasmic-facing; it reads RVHGGN. Residues 288-309 traverse the membrane as a helical segment; it reads ITKWVLMGGAIGGLCGLLGFVA. At 310 to 329 the chain is on the periplasmic side; the sequence is PATSGGGFNLIPIATAGNFS. 2 helical membrane-spanning segments follow: residues 330–349 and 355–376; these read MGML…LCFS and GIFA…MVVV. The short motif at 355–359 is the Selectivity filter part_3 element; the sequence is GIFAP. 2 residues coordinate chloride: isoleucine 356 and phenylalanine 357. Over 377–386 the chain is Periplasmic; it reads ELFPQYHLEA. Residues 387–401 constitute an intramembrane region (helical); that stretch reads GTFAIAGMGALLAAS. The segment at residues 402–404 is an intramembrane region (note=Loop between two helices); that stretch reads IRA. An intramembrane region (helical) is located at residues 405-416; it reads PLTGIILVLEMT. The note=Loop between two helices intramembrane region spans 417–421; it reads DNYQL. The chain crosses the membrane as a helical span at residues 422-438; sequence ILPMIITGLGATLLAQF. Topologically, residues 439 to 473 are cytoplasmic; it reads TGGKPLYSEILARTLAKQEAEQLARSKAASASENT. Tyrosine 445 serves as a coordination point for chloride.

It belongs to the chloride channel (TC 2.A.49) family. ClcA subfamily. Homodimer.

Its subcellular location is the cell inner membrane. The catalysed reaction is 2 chloride(in) + H(+)(out) = 2 chloride(out) + H(+)(in). Proton-coupled chloride transporter. Functions as antiport system and exchanges two chloride ions for 1 proton. Probably acts as an electrical shunt for an outwardly-directed proton pump that is linked to amino acid decarboxylation, as part of the extreme acid resistance (XAR) response. This Shigella boydii serotype 4 (strain Sb227) protein is H(+)/Cl(-) exchange transporter ClcA.